A 174-amino-acid polypeptide reads, in one-letter code: uncharacterized protein (174 aa).

2 stretches are compositionally biased toward basic and acidic residues: residues 1–31 (MDKH…GKEG) and 52–67 (EPPR…ERRS). A disordered region spans residues 1-69 (MDKHGVKTPL…GEGRERRSVS (69 aa)).

This is an uncharacterized protein from Homo sapiens (Human).